The primary structure comprises 30 residues: Beta/omega-theraphotoxin-Tp2a (30 aa).

3 cysteine pairs are disulfide-bonded: cysteine 2/cysteine 16, cysteine 9/cysteine 21, and cysteine 15/cysteine 25. The interval 26-30 (KKKLW) is flexible tail region important for ability to inhibit Nav channel. The interval 29-30 (LW) is hydrophobic dyad that anchors the toxin into the membrane while positioning it over the S3 helix of Nav1.7/SCN9A.

Belongs to the neurotoxin 30 (phrixotoxin) family. Expressed by the venom gland.

Its subcellular location is the secreted. In terms of biological role, gating-modifier toxin that targets voltage-gated sodium channels with a selective activity on Nav1.7/SCN9A (IC(50)=1-1.5 nM). It inhibits both activation and inactivation. For inhibition of activation, it is 100-fold more selective for Nav1.7/SCN9A (IC(50)=0.26-3) than for other sodium channels (Nav1.2/SCN2A (IC(50)=40-540 nM), Nav1.3/SCN3A (IC(50)=102 nM), Nav1.4/SCN4A (IC(50)=30-39 nM), Nav1.5/SCN5A (IC(50)=19-90 nM), Nav1.6/SCN8A (IC(50)=26 nM), and Nav1.8/SCN10A (IC(50)=146 nM)). For inhibition of inactivation, it is 20-fold more potent in inhibiting inactivation on Nav1.7/SCN9A (IC(50)=250 nM) than other channels (about 4.6 uM for all channels). It also weakly inhibits Cav1.2/CACNA1C and Cav3.2/CACNA1H (29% block at 1 uM). It inhibits Nav1.7/SCN9A activation by interacting with DII and impairs Nav1.7/SCN9A inactivation by interacting with DIV. It docks on top of the DII S3 helix Nav1.7/SCN9A. It is about 60-fold less active on Nav1.7/SCN9A at depolarized potential (0 mV; IC(50)=15 nM), compared to -120 mV potential (IC(50)=0.26 nM). This toxin binds to lipid membrane. This ability correlates with hNav1.7/SCN9A inhibition, showing that membrane binding is the first step in the inhibitory mechanism of this toxin. It inhibits Nav1.2/SCN2A less potently when it is coexpressed with SCN2B or SCN4B than when it is expressed alone, showing that beta subunits (SCN2B and SCN4B) have a protective effect. The polypeptide is Beta/omega-theraphotoxin-Tp2a (Thrixopelma pruriens (Peruvian green velvet tarantula)).